The following is a 458-amino-acid chain: LysM domain-containing protein ARB_05157 (458 aa).

Residues 1 to 19 (MVSLKVCFLLLASSELAFG) form the signal peptide. One can recognise a LysM 1 domain in the interval 157 to 203 (AFHLVKQGEDCGTISATYGITSAQFLAWNPSAGKDCTGLWANAYACV). Residues 210-232 (PPKTTSQAPQPTPTKPSNGIETP) are disordered. The segment covering 212–229 (KTTSQAPQPTPTKPSNGI) has biased composition (polar residues). 3 consecutive LysM domains span residues 245 to 291 (KFHL…YACV), 325 to 371 (KFYL…YSCV), and 409 to 455 (KFHF…YLCV).

It localises to the secreted. Might have a role in sequestration of chitin oligosaccharides (breakdown products of fungal cell walls that are released during invasion and act as triggers of host immunity) to dampen host defense. The protein is LysM domain-containing protein ARB_05157 of Arthroderma benhamiae (strain ATCC MYA-4681 / CBS 112371) (Trichophyton mentagrophytes).